A 456-amino-acid polypeptide reads, in one-letter code: Heme sensor protein HssS (456 aa).

The next 2 helical transmembrane spans lie at 9 to 29 (IAIYTITVILFSALVSFLFAN) and 164 to 184 (TFLAVLLICLLGISITLVIAS). One can recognise an HAMP domain in the interval 186-238 (YSIIKPIKILKQATERLMHGDFNSPIYQSRHDEIGTLQYRFEAMRQSLKQVDD). The Histidine kinase domain occupies 246 to 456 (NVSHEIKTPL…TFTVTLPETN (211 aa)). A Phosphohistidine; by autocatalysis modification is found at histidine 249.

Post-translationally, autophosphorylated.

The protein resides in the cell membrane. It carries out the reaction ATP + protein L-histidine = ADP + protein N-phospho-L-histidine.. Member of the two-component regulatory system HssS/HssR involved in intracellular heme homeostasis and tempering of staphylococcal virulence. HssS functions as a heme sensor histidine kinase which is autophosphorylated at a histidine residue and transfers its phosphate group to an aspartate residue of HssR. HssR/HssS activates the expression of hrtAB, an efflux pump, in response to extracellular heme, hemin, hemoglobin or blood. The polypeptide is Heme sensor protein HssS (hssS) (Staphylococcus haemolyticus (strain JCSC1435)).